The chain runs to 357 residues: Isopentenyl-diphosphate delta-isomerase (357 aa).

Arg-12–Lys-13 provides a ligand contact to substrate. Residues Ser-70, Ser-71–Thr-73, Ser-101, and Asn-130 contribute to the FMN site. Ser-101 to Arg-103 is a binding site for substrate. Gln-165 is a binding site for substrate. Glu-166 contributes to the Mg(2+) binding site. FMN contacts are provided by residues Lys-197, Gly-289 to Arg-291, and Ala-310 to Gln-311.

The protein belongs to the IPP isomerase type 2 family. As to quaternary structure, homooctamer. Dimer of tetramers. It depends on FMN as a cofactor. The cofactor is NADPH. Requires Mg(2+) as cofactor.

The protein localises to the cytoplasm. It catalyses the reaction isopentenyl diphosphate = dimethylallyl diphosphate. Involved in the biosynthesis of isoprenoids. Catalyzes the 1,3-allylic rearrangement of the homoallylic substrate isopentenyl (IPP) to its allylic isomer, dimethylallyl diphosphate (DMAPP). In Chlorobaculum parvum (strain DSM 263 / NCIMB 8327) (Chlorobium vibrioforme subsp. thiosulfatophilum), this protein is Isopentenyl-diphosphate delta-isomerase.